A 454-amino-acid chain; its full sequence is Butyrophilin-like protein 2 (454 aa).

At 1 to 6 (MVDCPR) the chain is on the cytoplasmic side. A helical; Signal-anchor for type II membrane protein membrane pass occupies residues 7–23 (YSLSGVAASFLFVLLTI). Topologically, residues 24–454 (KHPDDFRVVG…KTARFPLSGW (431 aa)) are extracellular. 4 Ig-like V-type domains span residues 27–140 (DDFR…VLLQ), 148–234 (PNIH…ATIA), 244–355 (ASVS…ARVD), and 365–452 (PRIT…FPLS). 4 disulfide bridges follow: cysteine 50-cysteine 124, cysteine 164-cysteine 218, cysteine 267-cysteine 341, and cysteine 381-cysteine 435. Asparagine 210, asparagine 296, asparagine 427, and asparagine 432 each carry an N-linked (GlcNAc...) asparagine glycan.

This sequence belongs to the immunoglobulin superfamily. BTN/MOG family. As to expression, highly expressed in intestine and at reduced levels in lung and stomach. Also expressed in thymus, spleen, lymph nodes, T-cells, B-cells, and macrophages.

The protein localises to the membrane. In terms of biological role, negative regulator of T-cell proliferation. The polypeptide is Butyrophilin-like protein 2 (Mus musculus (Mouse)).